Consider the following 470-residue polypeptide: L-seryl-tRNA(Sec) selenium transferase (470 aa).

K292 carries the post-translational modification N6-(pyridoxal phosphate)lysine.

The protein belongs to the SelA family. Pyridoxal 5'-phosphate is required as a cofactor.

The protein resides in the cytoplasm. The catalysed reaction is L-seryl-tRNA(Sec) + selenophosphate + H(+) = L-selenocysteinyl-tRNA(Sec) + phosphate. Its pathway is aminoacyl-tRNA biosynthesis; selenocysteinyl-tRNA(Sec) biosynthesis; selenocysteinyl-tRNA(Sec) from L-seryl-tRNA(Sec) (bacterial route): step 1/1. Converts seryl-tRNA(Sec) to selenocysteinyl-tRNA(Sec) required for selenoprotein biosynthesis. The chain is L-seryl-tRNA(Sec) selenium transferase from Moorella thermoacetica (strain ATCC 39073 / JCM 9320).